The primary structure comprises 302 residues: ATP synthase subunit b 1 (302 aa).

Residues 5-22 (WFTVIAQGINFLLLLWLL) traverse the membrane as a helical segment. Residues 278 to 302 (GLPENEGTDNPEANPPHAEAKIPHA) are disordered.

The protein belongs to the ATPase B chain family. In terms of assembly, F-type ATPases have 2 components, F(1) - the catalytic core - and F(0) - the membrane proton channel. F(1) has five subunits: alpha(3), beta(3), gamma(1), delta(1), epsilon(1). F(0) has three main subunits: a(1), b(2) and c(10-14). The alpha and beta chains form an alternating ring which encloses part of the gamma chain. F(1) is attached to F(0) by a central stalk formed by the gamma and epsilon chains, while a peripheral stalk is formed by the delta and b chains.

It localises to the cell inner membrane. In terms of biological role, f(1)F(0) ATP synthase produces ATP from ADP in the presence of a proton or sodium gradient. F-type ATPases consist of two structural domains, F(1) containing the extramembraneous catalytic core and F(0) containing the membrane proton channel, linked together by a central stalk and a peripheral stalk. During catalysis, ATP synthesis in the catalytic domain of F(1) is coupled via a rotary mechanism of the central stalk subunits to proton translocation. Its function is as follows. Component of the F(0) channel, it forms part of the peripheral stalk, linking F(1) to F(0). The sequence is that of ATP synthase subunit b 1 from Pseudoalteromonas atlantica (strain T6c / ATCC BAA-1087).